Here is a 313-residue protein sequence, read N- to C-terminus: MRTLYPEVTPFEHGILCVDDNHRLYYEQCGNPHGKPVVILHGGPGSGCNDKMRRFHDPDKYRIVLFDQRGAGRSTPHANLTNNTTWDLVADIEKLRVALGITRWQVFGGSWGSTLALAYAQTHPEQTTELVLRGIFMLRRWELEWFYQEGASHLFPDAWDRYIAVIPPVERHDLISAFHRRLTSEDEATRLAAAQAWSLWEGATSCLYMDQDFIASHENPHFALAFARIENHYFVNGGFFEVENQLLRDAQRIANIPGVIVHGRYDVVCPLQNAWDLHKVWPKASLKITPGAGHSAFEPQNIDALVCATDSFV.

An AB hydrolase-1 domain is found at 35-298 (KPVVILHGGP…TPGAGHSAFE (264 aa)). S110 serves as the catalytic Nucleophile. D266 is a catalytic residue. The active-site Proton donor is the H294.

Belongs to the peptidase S33 family.

The protein resides in the cytoplasm. It catalyses the reaction Release of N-terminal proline from a peptide.. Functionally, specifically catalyzes the removal of N-terminal proline residues from peptides. In Xylella fastidiosa (strain 9a5c), this protein is Proline iminopeptidase (pip).